We begin with the raw amino-acid sequence, 283 residues long: Beta-glucoside operon antiterminator (283 aa).

2 PRD domains span residues 65–170 (RIPL…SHMP) and 171–280 (EVMR…LQEQ).

This sequence belongs to the transcriptional antiterminator BglG family. In terms of processing, phosphorylated and inactivated by ArbF (EII-Bgl). The degree of phosphorylation is dependent on the presence or absence of beta-glucosides which act as inducers of the operon expression. Addition of inducer result in the rapid dephosphorylation of ArbG.

In terms of biological role, mediates the positive regulation of the beta-glucoside (arb) operon by functioning as a transcriptional antiterminator. This is an RNA-binding protein that recognizes a specific sequence located just upstream of two termination sites within the operon. This Dickeya chrysanthemi (Pectobacterium chrysanthemi) protein is Beta-glucoside operon antiterminator (arbG).